The primary structure comprises 1803 residues: 6-methylsalicylic acid synthase (1803 aa).

The segment at 1 to 40 (MEVHGDEVLSVDSGVSTPPSTGSGFRRPLETPGTEIGNLN) is disordered. Residues 13 to 24 (SGVSTPPSTGSG) show a composition bias toward low complexity. Residues 44-470 (QNEVAVVGMA…GTVSHAIIEE (427 aa)) enclose the Ketosynthase family 3 (KS3) domain. Catalysis depends on for beta-ketoacyl synthase activity residues C216, H351, and H391. The 314-residue stretch at 581–894 (VWVFSGHGAQ…SIAQLHCRGA (314 aa)) folds into the Malonyl-CoA:ACP transacylase (MAT) domain. S667 acts as the For malonyltransferase activity in catalysis. Residues 940-1058 (HTLLGQRVPV…GQWEAGGSKN (119 aa)) form an N-terminal hotdog fold region. The PKS/mFAS DH domain occupies 940 to 1218 (HTLLGQRVPV…FSEIEGTPGS (279 aa)). The active-site Proton acceptor; for thioesterase activity is the H972. Residues 1073 to 1218 (ANNKLADNFS…FSEIEGTPGS (146 aa)) are C-terminal hotdog fold. Residue D1129 is the Proton donor; for thioesterase activity of the active site. The interval 1141–1262 (TSVGSTLFFD…KNVADLYCGS (122 aa)) is required for homotetramer formation. The region spanning 1434 to 1628 (STYLITGGLG…AVAVQWTSWR (195 aa)) is the Ketoreductase (KR) domain. Residues 1701–1710 (ASSADAPSAA) are compositionally biased toward low complexity. Positions 1701–1721 (ASSADAPSAAPKETNEMPESI) are disordered. The region spanning 1726–1801 (TWLDERIRDC…HLVGWFLEKM (76 aa)) is the Carrier domain. The residue at position 1761 (S1761) is an O-(pantetheine 4'-phosphoryl)serine. Residues 1783–1803 (LTWSCPTVSHLVGWFLEKMGN) form a required for catalytic activity region.

As to quaternary structure, homotetramer.

The catalysed reaction is 3 malonyl-CoA + acetyl-CoA + NADPH + 3 H(+) = 6-methylsalicylate + 3 CO2 + NADP(+) + 4 CoA + H2O. The protein operates within secondary metabolite biosynthesis. Functionally, 6-methylsalicylic acid synthase; part of the gene cluster that mediates the biosynthesis of terreic acid, a quinone epoxide inhibitor of Bruton's tyrosine kinase. The first step of the pathway is the synthesis of 6-methylsalicylic acid (6-MSA) by the 6-methylsalicylic acid synthase atX. In the biosynthesis of 6-MSA, atX utilizes one acetyl-CoA and three malonyl-CoAs as its substrates and catalyzes a series of programmed reactions including Claisen condensation, reduction, aldol cyclization, and the hydrolytic cleavage that yields 6-MSA. The 6-methylsalicylate 1-monooxygenase atA then catalyzes the decarboxylative hydroxylation of 6-MSA to 3-methylcatechol. The next step is the conversion of 3-methylcatechol to 3-methyl-1,2,4-benzenetriol by cytochrome P450 monooxygenase atE, which is enhanced by cytochrome P450 monooxygenase atG. Then, the epoxidase atD catalyzes the epoxidation and hydroxyl oxidation of 3-methyl-1,2,4-benzenetriol to terremutin. Lastly, GMC oxidoreductase atC oxidizes terremutin to terreic acid. This Aspergillus terreus (strain NIH 2624 / FGSC A1156) protein is 6-methylsalicylic acid synthase.